A 383-amino-acid chain; its full sequence is NIPA-like protein 2 (383 aa).

2 N-linked (GlcNAc...) asparagine glycosylation sites follow: N23 and N33. The next 7 helical transmembrane spans lie at 46–66 (IHLFGVLLAILGNLVISISLN), 88–108 (VLWWGGVLLMAVGETGNFAAY), 110–130 (FAPITLIAPLGCVSVTGSAII), 144–164 (LLGTTLAFAGTYLLVNFAPNI), 177–197 (LVGWQFLIYVILEILIFCILL), 209–229 (VILLTLVAILASLTVISVKAV), and 243–263 (LTYPIFYIMFIIMIASCVFQV). N274 is a glycosylation site (N-linked (GlcNAc...) asparagine). 2 helical membrane-spanning segments follow: residues 278–298 (VVPVNHIFFTISAIIAGIIFY) and 306–326 (FLTVFIYLFGCFLSFLGVFLV). The interval 355 to 383 (QPDSHSLSYGTLPDGSDSTKSQSGEKKEV) is disordered.

This sequence belongs to the NIPA family.

It localises to the membrane. This chain is NIPA-like protein 2 (NIPAL2), found in Homo sapiens (Human).